The primary structure comprises 439 residues: MHFSIGSLFLYLIASASCTAASPQYIQRSRRTPFTTSTSKPSAFTNPSTDTATTPYVLELTKINNKGNARSAVELNSQVRSGSANLVSFAEGVGFATSINIGNQTFEVVIDTGSSDLWVVRDGFICIDPVSRKEVAQSECRFGPAYAPNTTFHEVVGEFVDIKYADGEILSGVIGTENVTLAGITVNQTIGVMDYAGWYGDGVTSGLMGLAYSSLASAYTTNNRQPRLYNPIFATMYEQGLIDPIFSMVMNRNASNGTAAGYLTLGGLPPVDINGNFSTTPILITNIKGYPKDYDFYAVNIDGVALGNRSLPEAAGGIQYIIDSGTTLNYYPTPVADSVNAAFIPPAVYNDYDGAYVVDCNATASVHGVMIGGSTFYINPTDMILPGGMDNSGNKTCISGINAGGDVGQGIFVLGGTFLRNVVAVFDVGAAEMRFAASA.

Positions 1–20 are cleaved as a signal peptide; that stretch reads MHFSIGSLFLYLIASASCTA. Residues 31 to 50 are disordered; sequence RTPFTTSTSKPSAFTNPSTD. The span at 32 to 45 shows a compositional bias: low complexity; it reads TPFTTSTSKPSAFT. The region spanning 95–436 is the Peptidase A1 domain; it reads FATSINIGNQ…DVGAAEMRFA (342 aa). N-linked (GlcNAc...) asparagine glycosylation occurs at asparagine 103. Aspartate 111 is a catalytic residue. Asparagine 149, asparagine 178, asparagine 187, asparagine 253, asparagine 256, asparagine 276, and asparagine 308 each carry an N-linked (GlcNAc...) asparagine glycan. The active site involves aspartate 323. N-linked (GlcNAc...) asparagine glycans are attached at residues asparagine 361 and asparagine 394.

It belongs to the peptidase A1 family.

It is found in the secreted. Its function is as follows. Probable aspartic-type endopeptidase which contributes to virulence. The protein is Probable aspartic-type endopeptidase AFUA_3G01220 of Aspergillus fumigatus (strain ATCC MYA-4609 / CBS 101355 / FGSC A1100 / Af293) (Neosartorya fumigata).